A 1530-amino-acid polypeptide reads, in one-letter code: Neurexin-1 (1530 aa).

An N-terminal signal peptide occupies residues 1 to 30; that stretch reads MGTALVQHGGCCLLCLSLLLLGCWAELGSG. One can recognise a Laminin G-like 1 domain in the interval 31-217; the sequence is LEFPGAEGQW…PPNSGGGSPC (187 aa). Over 31–1454 the chain is Extracellular; that stretch reads LEFPGAEGQW…EVIRESSSTT (1424 aa). Residues N125 and N190 are each glycosylated (N-linked (GlcNAc...) asparagine). A disordered region spans residues 196–219; that stretch reads PVDGSEVKLDEEPPNSGGGSPCEA. An EGF-like 1 domain is found at 213–255; that stretch reads GGSPCEAGDEGDGGVCLNGGVCSVVDDQAVCDCSRTGFRGKDC. 2 disulfide bridges follow: C228/C243 and C245/C255. 2 consecutive Laminin G-like domains span residues 299–496 and 503–695; these read IATF…AFKC and DPIT…KPSC. Positions 345, 362, and 430 each coordinate Ca(2+). Intrachain disulfides connect C460-C496, C666-C695, C703-C714, C708-C723, and C725-C735. The region spanning 699 to 736 is the EGF-like 2 domain; the sequence is TAKPCLSNPCKNNGMCRDGWNRYVCDCSGTGYLGRSCE. 2 Laminin G-like domains span residues 741-914 and 928-1103; these read VLSY…IDYC and DPVT…ERGC. Residues D788 and L805 each coordinate Ca(2+). N813 carries an N-linked (GlcNAc...) asparagine glycan. R864 contacts Ca(2+). Disulfide bonds link C906/C914, C1075/C1103, C1110/C1121, C1115/C1130, and C1132/C1142. Residues 1106 to 1143 enclose the EGF-like 3 domain; the sequence is PSTTCQEDSCSNQGVCLQQWDGFSCDCSMTSFSGPLCN. A Laminin G-like 6 domain is found at 1149–1347; sequence YIFSKGGGQI…DANIAIVGNV (199 aa). 2 residues coordinate Ca(2+): D1199 and V1216. N-linked (GlcNAc...) asparagine glycosylation is present at N1246. Ca(2+)-binding residues include I1298 and N1300. S1408 carries an O-linked (Xyl...) (heparan sulfate) serine glycan. The disordered stretch occupies residues 1412–1443; that stretch reads PSDDEDIDPCEPSSGGLANPTRVGGREPYPGS. The helical transmembrane segment at 1455-1475 threads the bilayer; it reads GMVVGIVAAAALCILILLYAM. Over 1476 to 1530 the chain is Cytoplasmic; it reads YKYRNRDEGSYHVDESRNYISNSAQSNGAVVKEKQPSSAKSANKNKKNKDKEYYV. An interaction with CASK region spans residues 1497–1523; that stretch reads NSAQSNGAVVKEKQPSSAKSANKNKKN. Residues 1497–1530 are disordered; it reads NSAQSNGAVVKEKQPSSAKSANKNKKNKDKEYYV.

It belongs to the neurexin family. In terms of assembly, interacts (via laminin G-like domain 2 and/or laminin G-like domain 6) with NLGN1 forming a heterotetramer, where one NLGN1 dimer interacts with one NRXN1 dimer. Also interacts (via laminin G-like domain 2 and/or laminin G-like domain 6) with NLGN2, NLGN3 and NLGN4L; interactions with NLGN1, NLGN2, NLGN3 and NLGN4L are calcium-dependent. Interacts (via cytoplasmic C-terminal region) with CASK (via the PDZ, SH3 and guanylate kinase-like domains). Interacts (via cytoplasmic C-terminus) with CASKIN1 and APBA1. Interacts (via laminin G-like domain 2) with NXPH1 and NXPH3. Alpha-type isoforms (neurexin-1-alpha) interact (via laminin G-like domain 2 and/or laminin G-like domain 6) with DAG1 (via alpha-dystroglycan chain). Interacts with LRRTM1, LRRTM2, LRRTM3 and LRRTM4. Interacts with SYT13 and SYTL1. Interacts with CBLN1, CBLN2 and, less avidly, with CBLN4. Interacts with CLSTN3. Alpha-type isoforms interact with alpha-latrotoxin from spider venom. O-glycosylated; contains heparan sulfate. Heparan sulfate attachment is required for synapse development by mediating interactions with neuroligins and LRRTM2. In terms of tissue distribution, brain (neuronal synapse).

The protein resides in the presynaptic cell membrane. Its function is as follows. Cell surface protein involved in cell-cell-interactions, exocytosis of secretory granules and regulation of signal transmission. Function is isoform-specific. Alpha-type isoforms have a long N-terminus with six laminin G-like domains and play an important role in synaptic signal transmission. Alpha-type isoforms play a role in the regulation of calcium channel activity and Ca(2+)-triggered neurotransmitter release at synapses and at neuromuscular junctions. They play an important role in Ca(2+)-triggered exocytosis of secretory granules in pituitary gland. They may affect their functions at synapses and in endocrine cells via their interactions with proteins from the exocytotic machinery. Likewise, alpha-type isoforms play a role in regulating the activity of postsynaptic NMDA receptors, a subtype of glutamate-gated ion channels. Both alpha-type and beta-type isoforms may play a role in the formation or maintenance of synaptic junctions via their interactions (via the extracellular domains) with neuroligin family members, CBLN1 or CBLN2. In vitro, triggers the de novo formation of presynaptic structures. May be involved in specification of excitatory synapses. Alpha-type isoforms were first identified as receptors for alpha-latrotoxin from spider venom. The sequence is that of Neurexin-1 (Nrxn1) from Rattus norvegicus (Rat).